We begin with the raw amino-acid sequence, 789 residues long: Disintegrin and metalloproteinase domain-containing protein 1 (789 aa).

Residues 1–68 (MSVAASASRS…LLIFLPSTLC (68 aa)) form the signal peptide. In terms of domain architecture, Peptidase M12B spans 238–432 (KYVEMFVVVN…HRGACLLDRP (195 aa)). Asparagine 259 is a glycosylation site (N-linked (GlcNAc...) asparagine). 4 disulfides stabilise this stretch: cysteine 348–cysteine 427, cysteine 388–cysteine 411, cysteine 390–cysteine 396, and cysteine 497–cysteine 517. Histidine 373 contacts Zn(2+). Glutamate 374 is an active-site residue. Zn(2+) is bound by residues histidine 377 and histidine 383. Asparagine 410 carries an N-linked (GlcNAc...) asparagine glycan. The Disintegrin domain occupies 441-525 (DAHCGNGVVE…ECPANSYMQD (85 aa)). N-linked (GlcNAc...) asparagine glycosylation is present at asparagine 633. The EGF-like domain maps to 666-700 (LQYDCHPQEMCHGNGVCNNFKHCHCDAGFSPPDCS). Disulfide bonds link cysteine 670/cysteine 682, cysteine 676/cysteine 688, and cysteine 690/cysteine 699. Asparagine 720 carries an N-linked (GlcNAc...) asparagine glycan. A helical transmembrane segment spans residues 743 to 763 (VVVLVVPIFLIVLLCCLMLIA). The Cytoplasmic portion of the chain corresponds to 764–789 (YLWSEVQEAVSPGSSSTTSSSESESD).

In terms of assembly, heterodimer with ADAM2/fertilin subunit beta.

Its subcellular location is the membrane. May be involved in sperm-egg fusion. The chain is Disintegrin and metalloproteinase domain-containing protein 1 (Adam1) from Rattus norvegicus (Rat).